The chain runs to 63 residues: MSYYRSYYGGLGYGYGGFGGWGYGYGCGYGSFRRLGYGCGYGGYGFSCCRPLYYGGYGFSAFY.

It belongs to the KRTAP type 19 family. As to quaternary structure, interacts with hair keratins.

Functionally, in the hair cortex, hair keratin intermediate filaments are embedded in an interfilamentous matrix, consisting of hair keratin-associated proteins (KRTAP), which are essential for the formation of a rigid and resistant hair shaft through their extensive disulfide bond cross-linking with abundant cysteine residues of hair keratins. The matrix proteins include the high-sulfur and high-glycine-tyrosine keratins. This is Keratin-associated protein 19-8 (KRTAP19-8) from Homo sapiens (Human).